Here is a 488-residue protein sequence, read N- to C-terminus: MFKRSVIAMACIFALSACGGGGGGSPDVKSADTLSKPAAPVVSEKETEAKEDAPQAGSQGQGAPSAQGSQDMAAVSEENTGNGGAVTADNPKNEDEVAQNDMPQNAAGTDSSTPNHTPDPNMLAGNMENQATDAGESSQPANQPDMANAADGMQGDDPSAGGQNAGNTAAQGANQAGNNQAAGSSDPIPASNPAPANGGSNFGRVDLANGVLIDGPSQNITLTHCKGDSCSGNNFLDEEVQLKSEFEKLSDADKISNYKKDGKNDKFVGLVADSVQMKGINQYIIFYKPKPTSFARFRRSARSRRSLPAEMPLIPVNQADTLIVDGEAVSLTGHSGNIFAPEGNYRYLTYGAEKLPGGSYALRVQGEPAKGEMLAGAAVYNGEVLHFHTENGRPYPTRGRFAAKVDFGSKSVDGIIDSGDDLHMGTQKFKAAIDGNGFKGTWTENGSGDVSGKFYGPAGEEVAGKYSYRPTDAEKGGFGVFAGKKEQD.

Residues 1–17 (MFKRSVIAMACIFALSA) form the signal peptide. Residue Cys-18 is the site of N-palmitoyl cysteine attachment. Cys-18 carries S-diacylglycerol cysteine lipidation. Residues 21 to 201 (GGGGSPDVKS…NPAPANGGSN (181 aa)) are disordered. The segment covering 43–53 (SEKETEAKEDA) has biased composition (basic and acidic residues). A compositionally biased stretch (low complexity) spans 54–70 (PQAGSQGQGAPSAQGSQ). 2 stretches are compositionally biased toward polar residues: residues 101-118 (DMPQ…NHTP) and 127-142 (MENQ…QPAN). Over residues 160-183 (AGGQNAGNTAAQGANQAGNNQAAG) the composition is skewed to low complexity. An Arg-rich motif motif is present at residues 296-306 (RFRRSARSRRS). The segment at 306–488 (SLPAEMPLIP…GVFAGKKEQD (183 aa)) is C1 fragment.

It belongs to the NHBA family. In terms of assembly, the C-terminal beta-barrel forms a monomer. Post-translationally, cleaved in vivo by the Neisserial phase-variable autotransporter/serine protease NalP to give 2 fragments. The N-terminus remains in the cell outer membrane while the 22 kDa C-terminus (beginning on Ser-293) is soluble; this soluble fragment is called C2. Cleaved in vitro by human lactoferrin (LTF, between Arg-305 and Ser-306), this fragment is called C1. Cleavage by NalP or lactoferrin does not alter killing of Neisseria by bactericidal antibodies in vitro. Recombinant and cell surface protein is cleaved by human saliva kallikrein (KLK1) between Ser-303 and Arg-304; in saliva kallikrein is more active on NHBA than lactoferrin. Human plasma kallikrein (KLKB1) cleaves in a similar manner to KLK1.

It localises to the cell outer membrane. The protein localises to the cell surface. It is found in the host mitochondrion. Functionally, a major human immunogenic protein detected in patients recovering from meningitidis, where it induces bactericidal antibodies. Binds heparin and heparan sulfate proteoglycan in vitro via the Arg-rich motif. Heparin-binding to this protein protects bacteria against killing by bactericidal antibodies (serum killing). Binds to human cells via the Arg-rich region; binding may require the intact protein as protein fragments do not bind to human cells. Protein binding to human cells is abolished by treatment with heparinase III but not chondroitinase ABC. The bacteria binds a number of human extracellular sialyated and/or sulfated glycans via this protein, including chondroitin sulfate (KD=5.2 nM), heparin (KD=52 nM) and ganglioside GT3 (KD=210 nM). The recombinant protein binds DNA non-specifically. Its function is as follows. Plays a role in extracellular-DNA (eDNA) mediated biofilm formation. In strain MC58 eDNA stimulates biofilm formation. When NHBA is not processed by NalP there is an increase in positively charged, NHBA- and IgA-derived DNA-binding peptides on the cell surface, resulting in increased DNA-binding peptides and increased biofilm formation. In terms of biological role, [C2 fragment] Localizes to host mitochondria when applied to the apical side of human endothelial cell layers, where it induces production of reactive oxygen species which lead to increased permeability of host endothelial cells. The C1 fragment (which lacks the first 14 residues of C2) does not have this effect. It is not known if this occurs during Neisseria infections. The sequence is that of Neisserial heparin binding antigen from Neisseria meningitidis serogroup B (strain ATCC BAA-335 / MC58).